Reading from the N-terminus, the 259-residue chain is MVTTTSPVKAESRNLSFYYSSGHKALKGITMPLYEKRITALIGPSGCGKSTFLRCFNRMHDLYPGNKYDGQIVMYPDNTNILDNGVDPIEVRMRISMVFQKPNPFPKSIYENVAYGLRVRGERNKRVVDDKVEEALKGAALWDEVKDRLHDLAFNLSGGQQQRLCIARALATDPEIMLFDEPTSALDPIATANIEELMSELRNKLTILVVTHNMQQAARVSDYTAYMYLGELIEYDDTDKIFTNPSRKETEDYITGKFG.

In terms of domain architecture, ABC transporter spans 10-254 (AESRNLSFYY…PSRKETEDYI (245 aa)). 43-50 (GPSGCGKS) contributes to the ATP binding site.

It belongs to the ABC transporter superfamily. Phosphate importer (TC 3.A.1.7) family. As to quaternary structure, the complex is composed of two ATP-binding proteins (PstB), two transmembrane proteins (PstC and PstA) and a solute-binding protein (PstS).

It is found in the cell inner membrane. It catalyses the reaction phosphate(out) + ATP + H2O = ADP + 2 phosphate(in) + H(+). Its function is as follows. Part of the ABC transporter complex PstSACB involved in phosphate import. Responsible for energy coupling to the transport system. This is Phosphate import ATP-binding protein PstB from Methylobacillus flagellatus (strain ATCC 51484 / DSM 6875 / VKM B-1610 / KT).